Here is a 120-residue protein sequence, read N- to C-terminus: MHNKIVRIASSALTGGKLLEKLKPLTRWEVQWDPNKTKCLGITREVTFKDYETTWAFLTRVSMRSHLWGHHPLIHTSYTWVKLELHTHDIDPKDGAHSQLSDIDVRMAKRIDSYIDEMTT.

The protein belongs to the pterin-4-alpha-carbinolamine dehydratase family.

The enzyme catalyses (4aS,6R)-4a-hydroxy-L-erythro-5,6,7,8-tetrahydrobiopterin = (6R)-L-erythro-6,7-dihydrobiopterin + H2O. This is Putative pterin-4-alpha-carbinolamine dehydratase from Saccharomyces cerevisiae (strain ATCC 204508 / S288c) (Baker's yeast).